Consider the following 277-residue polypeptide: Large ribosomal subunit protein uL2c (277 aa).

Residues Val-224 to Arg-257 are disordered.

Belongs to the universal ribosomal protein uL2 family. As to quaternary structure, part of the 50S ribosomal subunit.

The protein localises to the plastid. It is found in the chloroplast. The polypeptide is Large ribosomal subunit protein uL2c (rpl2) (Anthoceros angustus (Hornwort)).